The chain runs to 617 residues: D-glucuronyl C5-epimerase (617 aa).

Over 1–11 (MRCLAARVNYK) the chain is Cytoplasmic. A helical; Signal-anchor for type II membrane protein transmembrane segment spans residues 12-28 (TLIIICALFTLVTVLLW). Residues 29–617 (NKCSSDKAIQ…YLKGSRAKHN (589 aa)) are Lumenal-facing. Substrate-binding positions include tyrosine 179, 184–186 (RDR), glutamine 201, tyrosine 209, glutamine 212, and glutamine 215. Residues threonine 237, glutamate 239, threonine 268, asparagine 269, and aspartate 392 each contribute to the Ca(2+) site. Substrate contacts are provided by residues 429–432 (KLGE), 499–500 (EY), asparagine 510, tyrosine 514, tyrosine 560, arginine 563, and 572–581 (NLARWDYHTT).

This sequence belongs to the D-glucuronyl C5-epimerase family. As to quaternary structure, homodimer. Interacts with HS2ST1.

It is found in the golgi apparatus membrane. It carries out the reaction [heparosan-N-sulfate](n) = [heparan-N-sulfate](n). It functions in the pathway glycan metabolism; heparan sulfate biosynthesis. The protein operates within glycan metabolism; heparin biosynthesis. In terms of biological role, converts D-glucuronic acid residues adjacent to N-sulfate sugar residues to L-iduronic acid residues, both in maturing heparan sulfate (HS) and heparin chains. This is important for further modifications that determine the specificity of interactions between these glycosaminoglycans and proteins. This is D-glucuronyl C5-epimerase (GLCE) from Bos taurus (Bovine).